The chain runs to 400 residues: Tryptophan synthase beta chain (400 aa).

Lys92 is subject to N6-(pyridoxal phosphate)lysine.

The protein belongs to the TrpB family. As to quaternary structure, tetramer of two alpha and two beta chains. Pyridoxal 5'-phosphate serves as cofactor.

The enzyme catalyses (1S,2R)-1-C-(indol-3-yl)glycerol 3-phosphate + L-serine = D-glyceraldehyde 3-phosphate + L-tryptophan + H2O. It participates in amino-acid biosynthesis; L-tryptophan biosynthesis; L-tryptophan from chorismate: step 5/5. Functionally, the beta subunit is responsible for the synthesis of L-tryptophan from indole and L-serine. This is Tryptophan synthase beta chain from Neisseria gonorrhoeae (strain NCCP11945).